A 142-amino-acid polypeptide reads, in one-letter code: Hemoglobin subunit alpha 1 (142 aa).

Position 1 is an N-acetylserine (Ser1). The region spanning 1–142 (SLSDKDKAAV…VSLALSERYR (142 aa)) is the Globin domain. An O2-binding site is contributed by His59. Heme b is bound at residue His88.

The protein belongs to the globin family. Hb1 is a heterotetramer of two alpha-1 chains and two beta-1 chains. Hb2 is a heterotetramer of two alpha-2 chains and two beta-1 chains. HbC is a heterotetramer of two alpha-1 chains and two beta-2 chains. As to expression, red blood cells.

Its function is as follows. Involved in oxygen transport from gills to the various peripheral tissues. The protein is Hemoglobin subunit alpha 1 of Eleginops maclovinus (Patagonian blennie).